A 229-amino-acid polypeptide reads, in one-letter code: Urease accessory protein UreF (229 aa).

Belongs to the UreF family. UreD, UreF and UreG form a complex that acts as a GTP-hydrolysis-dependent molecular chaperone, activating the urease apoprotein by helping to assemble the nickel containing metallocenter of UreC. The UreE protein probably delivers the nickel.

It localises to the cytoplasm. In terms of biological role, required for maturation of urease via the functional incorporation of the urease nickel metallocenter. The protein is Urease accessory protein UreF of Staphylococcus saprophyticus subsp. saprophyticus (strain ATCC 15305 / DSM 20229 / NCIMB 8711 / NCTC 7292 / S-41).